Here is a 459-residue protein sequence, read N- to C-terminus: NADH oxidase (459 aa).

An FAD-binding site is contributed by Asn-10. His-11 functions as the Proton acceptor in the catalytic mechanism. Residues Ala-12, Asp-34, Gln-35, Cys-44, Val-81, Ala-110, Ser-113, Lys-143, and Tyr-172 each coordinate FAD. The active-site Redox-active is the Cys-44. Cys-44 carries the cysteine sulfinic acid (-SO2H) modification. Positions 173, 192, 201, and 256 each coordinate NAD(+). Asp-294 contributes to the FAD binding site. Residue Ala-310 coordinates NAD(+). Leu-311, Ala-312, and Ser-313 together coordinate FAD. Gly-341 lines the NAD(+) pocket. FAD is bound at residue Phe-439.

The protein belongs to the class-III pyridine nucleotide-disulfide oxidoreductase family. FAD is required as a cofactor.

The protein resides in the secreted. It is found in the cell wall. The catalysed reaction is 2 NADH + O2 + 2 H(+) = 2 NAD(+) + 2 H2O. Functionally, catalyzes the four-electron reduction of molecular oxygen to water. Plays a role in redox balance maintenance. May be involved in mediating bacterial adhesion to host cells. May be considered a potential virulence factor. The protein is NADH oxidase of Streptococcus pneumoniae serotype 4 (strain ATCC BAA-334 / TIGR4).